Here is a 262-residue protein sequence, read N- to C-terminus: ELL-associated factor 2 (262 aa).

The tract at residues 17 to 104 is necessary for interaction with ELL; it reads LKLGESFEKQ…TGECRLEKLS (88 aa). A compositionally biased stretch (polar residues) spans 124–144; it reads LEQQQQQMWNPPRTSNLVQHS. Disordered regions lie at residues 124-154 and 170-232; these read LEQQQQQMWNPPRTSNLVQHSPSEDKLSPTS and MDQM…ADTT. A phosphoserine mark is found at serine 146, serine 151, and serine 154. The span at 174 to 192 shows a compositional bias: low complexity; the sequence is SSCDSSSDSRSSSSSSSED. Positions 177 to 262 are necessary for transactivation activity; that stretch reads DSSSDSRSSS…LSESDSDSED (86 aa). The segment at 248-262 is necessary for interaction with TCEA1 and transactivation activity; the sequence is RSDLQLSESDSDSED.

The protein belongs to the EAF family. Component of the super elongation complex (SEC), at least composed of EAF1, EAF2, CDK9, MLLT3/AF9, AFF (AFF1 or AFF4), the P-TEFb complex and ELL (ELL, ELL2 or ELL3). Interacts with ELL, ELL2 and TCEA1.

Its subcellular location is the nucleus speckle. Acts as a transcriptional transactivator of ELL, ELL2 and TCEA1 elongation activities. Potent inducer of apoptosis in prostatic and non-prostatic cell lines. This Rattus norvegicus (Rat) protein is ELL-associated factor 2 (Eaf2).